Consider the following 209-residue polypeptide: Kynurenine formamidase (209 aa).

Trp-18 is a substrate binding site. Zn(2+)-binding residues include His-48, His-52, and Asp-54. His-58 (proton donor/acceptor) is an active-site residue. Residues His-160 and Glu-172 each coordinate Zn(2+).

The protein belongs to the Cyclase 1 superfamily. KynB family. Homodimer. Zn(2+) is required as a cofactor.

The enzyme catalyses N-formyl-L-kynurenine + H2O = L-kynurenine + formate + H(+). It participates in amino-acid degradation; L-tryptophan degradation via kynurenine pathway; L-kynurenine from L-tryptophan: step 2/2. Functionally, catalyzes the hydrolysis of N-formyl-L-kynurenine to L-kynurenine, the second step in the kynurenine pathway of tryptophan degradation. In Maricaulis maris (strain MCS10) (Caulobacter maris), this protein is Kynurenine formamidase.